A 229-amino-acid polypeptide reads, in one-letter code: Protein FMP52-2, mitochondrial (229 aa).

The transit peptide at 1–45 (MAAGAFILGSTGLCGYQMLRFAEKSSLFDKISTVGRKLPDFKSEK) directs the protein to the mitochondrion.

This sequence belongs to the FMP52 family.

The protein localises to the mitochondrion outer membrane. The protein is Protein FMP52-2, mitochondrial (FMP522) of Scheffersomyces stipitis (strain ATCC 58785 / CBS 6054 / NBRC 10063 / NRRL Y-11545) (Yeast).